Here is a 400-residue protein sequence, read N- to C-terminus: Elongation factor Tu (400 aa).

The region spanning 10–209 (KPHVNIGTIG…VVDKYIPTPQ (200 aa)) is the tr-type G domain. The segment at 19–26 (GHVDHGKT) is G1. 19–26 (GHVDHGKT) contacts GTP. Residue Thr26 coordinates Mg(2+). The segment at 60–64 (GITIN) is G2. The interval 81–84 (DCPG) is G3. GTP contacts are provided by residues 81–85 (DCPGH) and 136–139 (NKVD). Residues 136-139 (NKVD) are G4. The tract at residues 174–176 (SAL) is G5.

Belongs to the TRAFAC class translation factor GTPase superfamily. Classic translation factor GTPase family. EF-Tu/EF-1A subfamily. As to quaternary structure, monomer.

It localises to the cytoplasm. The catalysed reaction is GTP + H2O = GDP + phosphate + H(+). Its function is as follows. GTP hydrolase that promotes the GTP-dependent binding of aminoacyl-tRNA to the A-site of ribosomes during protein biosynthesis. This Caldicellulosiruptor saccharolyticus (strain ATCC 43494 / DSM 8903 / Tp8T 6331) protein is Elongation factor Tu.